A 379-amino-acid polypeptide reads, in one-letter code: MLPSHLNGHSPLARRRPRLSAASPPATGDSDAAAAAADAPLAEHDRIYFQSYSHIGIHEAMIKDRVRTDAYRSAIMHHQKFIEGKVVMDVGCGTGILSVFCARAGAKCVYAVEASEMATQAREIVKANNLDDKVVVVHGRVEDVEVEDKVDVIISEWMGYMLLYESMLPSVLFARDKWLKPGGLILPSHATLFMAPITNSERYEGSVDFWSDVYGINMSALVPLAKKFTSEEPSIEIIGGENVLSWPFVVKHIDCYTFKAEELKSITTKYKVSSMMLAPIHGFGLWFEVEFNGPSNPTDKSPSDLNPLDVIRTKRRRGSEDPVVLSTAPEDEPTHWHQTILYFPDPIEVKQDQIIEGSVKVSQSEENPRFLNIQLDCTM.

The interval 1 to 35 is disordered; that stretch reads MLPSHLNGHSPLARRRPRLSAASPPATGDSDAAAA. The segment covering 19–35 has biased composition (low complexity); the sequence is LSAASPPATGDSDAAAA. The SAM-dependent MTase PRMT-type domain maps to 45–379; that stretch reads DRIYFQSYSH…FLNIQLDCTM (335 aa). S-adenosyl-L-methionine contacts are provided by H58, R67, G91, E113, and E142. Residues E156 and E165 contribute to the active site.

It belongs to the class I-like SAM-binding methyltransferase superfamily. Protein arginine N-methyltransferase family. PRMT6 subfamily.

Its function is as follows. Arginine methyltransferase that can both catalyze the formation of omega-N monomethylarginine (MMA) and asymmetrical dimethylarginine (aDMA). This chain is Probable protein arginine N-methyltransferase 6.1 (PRMT6.1), found in Oryza sativa subsp. indica (Rice).